The sequence spans 222 residues: Small ribosomal subunit protein eS1 (222 aa).

The protein belongs to the eukaryotic ribosomal protein eS1 family.

The sequence is that of Small ribosomal subunit protein eS1 from Pyrobaculum calidifontis (strain DSM 21063 / JCM 11548 / VA1).